A 199-amino-acid chain; its full sequence is Chaperone protein TorD (199 aa).

Belongs to the TorD/DmsD family. TorD subfamily.

The protein resides in the cytoplasm. Involved in the biogenesis of TorA. Acts on TorA before the insertion of the molybdenum cofactor and, as a result, probably favors a conformation of the apoenzyme that is competent for acquiring the cofactor. The protein is Chaperone protein TorD of Actinobacillus pleuropneumoniae serotype 7 (strain AP76).